We begin with the raw amino-acid sequence, 584 residues long: (+)-larreatricin hydroxylase, chloroplastic (584 aa).

The transit peptide at 1–32 directs the protein to the chloroplast; that stretch reads MASLSSQSKLLATPYSFPYHTKPSRVSLRRVS. A thylakoid-targeting transit peptide spans 33–79; sequence CKASNDNKDKPNDQEKTFSIDRRNMLIGLGGLYGASNVFPSNQSTLA. Disulfide bonds link cysteine 91-cysteine 106 and cysteine 105-cysteine 168. Cu cation contacts are provided by histidine 167, histidine 188, histidine 197, histidine 319, histidine 323, and histidine 353. Positions 171 to 188 form a cross-link, 2'-(S-cysteinyl)-histidine (Cys-His); it reads CNGAYDQVGFPDVNIQVH. A propeptide spans 432-584 (removed in mature form); that stretch reads RLRSKATTTT…KIEFVRDEED (153 aa).

The protein belongs to the tyrosinase family. Cu(2+) is required as a cofactor.

It localises to the plastid. It is found in the chloroplast thylakoid lumen. The catalysed reaction is (+)-larreatricin + AH2 + O2 = (+)-3'-hydroxylarreatricin + A + H2O. Enantio-specific polyphenol oxidase involved in aromatic ring hydroxylation. Involved in the biosynthesis of the creosote bush 8-8' linked lignans. Has a strong preference for the 3' position of (+)-larreatricin. This chain is (+)-larreatricin hydroxylase, chloroplastic, found in Larrea tridentata (Creosote bush).